The following is a 96-amino-acid chain: Growth-regulated alpha protein (96 aa).

The N-terminal stretch at 1-24 (MIPATRSLLCAALLLLATSRLATG) is a signal peptide. Intrachain disulfides connect cysteine 33–cysteine 59 and cysteine 35–cysteine 75.

Belongs to the intercrine alpha (chemokine CxC) family. In terms of processing, the N-terminal processed form KC(5-72) is produced by proteolytic cleavage after secretion from bone marrow stromal cells.

The protein localises to the secreted. Its function is as follows. Has chemotactic activity for neutrophils. Contributes to neutrophil activation during inflammation. Hematoregulatory chemokine, which, in vitro, suppresses hematopoietic progenitor cell proliferation. KC(5-72) shows a highly enhanced hematopoietic activity. In Mus musculus (Mouse), this protein is Growth-regulated alpha protein (Cxcl1).